The sequence spans 278 residues: Deoxyribonuclease-1-like 2 (278 aa).

A signal peptide spans 1–21 (MGWPWAPLTAVWALGVMGATA). Catalysis depends on residues glutamate 99 and histidine 150. Cysteine 189 and cysteine 225 form a disulfide bridge.

This sequence belongs to the DNase I family. Requires Mg(2+) as cofactor. Ca(2+) serves as cofactor.

Its subcellular location is the cytoplasm. The protein localises to the secreted. Its function is as follows. Divalent cation-dependent acid DNA endonuclease involved in the breakdown of the nucleus during corneocyte formation of epidermal keratinocytes. May play an immune role by eliminating harmful DNA released into the extracellular environment by damaged epidermal cells. This is Deoxyribonuclease-1-like 2 (Dnase1l2) from Mus musculus (Mouse).